A 283-amino-acid polypeptide reads, in one-letter code: MPMKPLDGETTSTEKLSPVLRPTVLIFDSGVGGLSVYNEIRTLLPDLHYLYAFDNVAFPYGEKSEAFIVERVLDIVTAVTGLYPLALVVIACNSASTVTLPALRARFAFPVVGVVPAIKPAARLTRNGIVGLLATRGTVKRPYTHELVARFAGECKTEMLGSGELVDIAEAKLHGQPVAIEEVRRILQPWLRMAEPPDTVVLGCTHFPLISEELQQVLPQGTRLIDSGAAIARRTVWLLENESPEVLSADDNMALCLEITEQTVQLIPVLQRYGFKTLKKLAL.

Substrate is bound by residues 28–29 (DS) and 60–61 (YG). Residue C92 is the Proton donor/acceptor of the active site. Residue 93 to 94 (NS) participates in substrate binding. C204 acts as the Proton donor/acceptor in catalysis. 205-206 (TH) contacts substrate.

This sequence belongs to the aspartate/glutamate racemases family.

The catalysed reaction is L-glutamate = D-glutamate. Its pathway is cell wall biogenesis; peptidoglycan biosynthesis. Provides the (R)-glutamate required for cell wall biosynthesis. This Erwinia tasmaniensis (strain DSM 17950 / CFBP 7177 / CIP 109463 / NCPPB 4357 / Et1/99) protein is Glutamate racemase.